A 217-amino-acid chain; its full sequence is Pre-mRNA-splicing factor sap62 (217 aa).

The Matrin-type zinc finger occupies 54-84; that stretch reads FECRLCLTTHANENSYLTHTQGKKHQTNLAR.

This sequence belongs to the SF3A2 family. As to quaternary structure, belongs to the 40S cdc5-associated complex (or cwf complex), a spliceosome sub-complex reminiscent of a late-stage spliceosome composed of the U2, U5 and U6 snRNAs and at least brr2, cdc5, cwf2/prp3, cwf3/syf1, cwf4/syf3, cwf5/ecm2, spp42/cwf6, cwf7/spf27, cwf8, cwf9, cwf10, cwf11, cwf12, prp45/cwf13, cwf14, cwf15, cwf16, cwf17, cwf18, cwf19, cwf20, cwf21, cwf22, cwf23, cwf24, cwf25, cwf26, cyp7/cwf27, cwf28, cwf29/ist3, lea1, msl1, prp5/cwf1, prp10, prp12/sap130, prp17, prp22, sap61, sap62, sap114, sap145, slu7, smb1, smd1, smd3, smf1, smg1 and syf2.

The protein resides in the nucleus. Its subcellular location is the cytoplasm. Its function is as follows. Involved in mRNA splicing where it associates with cdc5 and the other cwf proteins as part of the spliceosome. The polypeptide is Pre-mRNA-splicing factor sap62 (sap62) (Schizosaccharomyces pombe (strain 972 / ATCC 24843) (Fission yeast)).